A 270-amino-acid polypeptide reads, in one-letter code: Regulatory protein RecX (270 aa).

This sequence belongs to the RecX family.

It localises to the cytoplasm. Functionally, modulates RecA activity. In Bacillus mycoides (strain KBAB4) (Bacillus weihenstephanensis), this protein is Regulatory protein RecX.